Consider the following 114-residue polypeptide: Procyclic form-specific polypeptide A-alpha (114 aa).

The signal sequence occupies residues 1–27; sequence MAPRSLYLLAILLFSANLFAGVGFAAA. The tract at residues 33-95 is disordered; the sequence is SNVIVKGGKG…EPEPEPGAAT (63 aa). Over residues 47 to 89 the composition is skewed to acidic residues; the sequence is DGPEEPEETGPEETGPEETGPEETGPEETGPEETGPEETEPEP. 7 tandem repeats follow at residues 48–52, 56–60, 61–65, 66–70, 71–75, 76–80, and 81–85. Positions 48 to 85 are 7 X 5 AA tandem repeats of G-P-E-E-[PT]; that stretch reads GPEEPEETGPEETGPEETGPEETGPEETGPEETGPEET. Gly92 is lipidated: GPI-anchor amidated glycine. Positions 93–114 are excised as a propeptide; sequence AATLKSVALPFAVAAAALVAAF.

The protein resides in the cell membrane. Major surface antigen of procyclic forms. This is Procyclic form-specific polypeptide A-alpha (PARPA-ALPHA) from Trypanosoma brucei brucei.